We begin with the raw amino-acid sequence, 316 residues long: tRNA dimethylallyltransferase (316 aa).

12 to 19 (GPTASGKT) is an ATP binding site. 14–19 (TASGKT) is a substrate binding site. Interaction with substrate tRNA regions lie at residues 37-40 (DSAL) and 161-165 (QRILR).

Belongs to the IPP transferase family. As to quaternary structure, monomer. Mg(2+) serves as cofactor.

It catalyses the reaction adenosine(37) in tRNA + dimethylallyl diphosphate = N(6)-dimethylallyladenosine(37) in tRNA + diphosphate. In terms of biological role, catalyzes the transfer of a dimethylallyl group onto the adenine at position 37 in tRNAs that read codons beginning with uridine, leading to the formation of N6-(dimethylallyl)adenosine (i(6)A). The sequence is that of tRNA dimethylallyltransferase from Idiomarina loihiensis (strain ATCC BAA-735 / DSM 15497 / L2-TR).